The primary structure comprises 215 residues: Sodium channel regulatory subunit beta-3 (215 aa).

Positions 1 to 22 (MPAFNRLFPLASLVLIYWVSVC) are cleaved as a signal peptide. The Extracellular segment spans residues 23–156 (FPVCVEVPSE…EEAGEDFTSV (134 aa)). 2 cysteine pairs are disulfide-bonded: C26–C48 and C45–C120. Residues 32-154 (ETEAVQGNPM…VTEEAGEDFT (123 aa)) form the Ig-like C2-type domain. 4 N-linked (GlcNAc...) asparagine glycosylation sites follow: N95, N109, N113, and N121. A helical membrane pass occupies residues 157-178 (VSEIMMYILLVFLTLWLLIEMI). The Cytoplasmic portion of the chain corresponds to 179-215 (YCYRKVSKAEEAAQENASDYLAIPSENKENSAVPVEE).

Belongs to the sodium channel auxiliary subunit SCN3B (TC 8.A.17) family. In terms of assembly, a voltage-gated sodium (Nav) channel consists of an ion-conducting pore-forming alpha subunit functional on its own that is regulated by one or more beta subunits. Forms homodimers and homotrimers. SCN3B is non-covalently associated with alpha subunits and induces the formation of alpha subunit oligomers, including trimers. Interacts with SCN5A/Nav1.5; regulatory subunit of SCN5A/Nav1.5. Interacts with SCN7A/Nav2.1; probable regulatory subunit of SCN7A/Nav2.1. Interacts with SCN10A; regulatory subunit of SCN10A/Nav1.8. Interacts with NFASC; probably involved in targeting the sodium channels to the nodes of Ranvier. Intramolecular disulfide bonds favor the voltage-gated sodium channel oligomeric complex assembly. In terms of processing, N-glycosylated. As to expression, expressed in the atrium.

Its subcellular location is the cell membrane. Regulatory subunit of multiple voltage-gated sodium (Nav) channels directly mediating the depolarization of excitable membranes. Navs, also called VGSCs (voltage-gated sodium channels) or VDSCs (voltage-dependent sodium channels), operate by switching between closed and open conformations depending on the voltage difference across the membrane. In the open conformation they allow Na(+) ions to selectively pass through the pore, along their electrochemical gradient. The influx of Na+ ions provokes membrane depolarization, initiating the propagation of electrical signals throughout cells and tissues. The accessory beta subunits participate in localization and functional modulation of the Nav channels. Modulates the activity of SCN2A/Nav1.2, causing a hyperpolarizing shift in the voltage-dependence of inactivation of the channel and increasing the fraction of channels operating in the fast gating mode. Modulates the activity of SCN5A/Nav1.5. Could also regulate the atypical sodium channel SCN7A/Nav2.1. Modulates the activity of SCN10A/Nav1.8, regulating its oligomerization and accelerating the recovery from inactivation. The sequence is that of Sodium channel regulatory subunit beta-3 from Homo sapiens (Human).